We begin with the raw amino-acid sequence, 582 residues long: Semenogelin-2 (582 aa).

A signal peptide spans 1 to 23 (MKSIILFVLSLLLILEKQAAVMG). Disordered regions lie at residues 25-62 (KGGS…SKGS), 131-156 (KGGQ…KGIF), 173-192 (KEQA…GSQS), 272-477 (NLNQ…EQRQ), and 502-554 (VEGK…SGAH). Residues 50 to 59 (GQKDKQHTES) show a composition bias toward basic and acidic residues. 2 stretches are compositionally biased toward polar residues: residues 137–151 (HGTQ…NSPS) and 174–192 (EQAS…GSQS). The span at 292–310 (RTEERQLNHGEKSVQKDVS) shows a compositional bias: basic and acidic residues. Positions 325–335 (KSQNQVTIPSQ) are enriched in polar residues. The segment covering 336–345 (DQEHGHKENK) has biased composition (basic and acidic residues). Residues 385 to 395 (KSQNQVTIPSQ) are compositionally biased toward polar residues. Residues 396–405 (DQEHGHKENK) are compositionally biased toward basic and acidic residues. Over residues 445-455 (KSQNQVTIPSQ) the composition is skewed to polar residues. Basic and acidic residues predominate over residues 456–465 (DQEHGHKENK). Polar residues-rich tracts occupy residues 466 to 477 (ISYQSSSTEQRQ) and 506 to 529 (SQIQ…NSGK). Residues 537-546 (LLSHEQEGRY) show a composition bias toward basic and acidic residues.

This sequence belongs to the semenogelin family. In terms of assembly, interacts with SERPINA5.

It is found in the secreted. Participates in the formation of a gel matrix (sperm coagulum) entrapping the accessory gland secretions and ejaculated spermatozoa. The protein is Semenogelin-2 (SEMG2) of Macaca nemestrina (Pig-tailed macaque).